A 277-amino-acid polypeptide reads, in one-letter code: UPF0276 protein PSEEN3355 (277 aa).

This sequence belongs to the UPF0276 family.

This chain is UPF0276 protein PSEEN3355, found in Pseudomonas entomophila (strain L48).